We begin with the raw amino-acid sequence, 175 residues long: Small ribosomal subunit protein uS7 (175 aa).

The protein belongs to the universal ribosomal protein uS7 family. In terms of assembly, part of the 30S ribosomal subunit. Contacts proteins S9 and S11.

Its function is as follows. One of the primary rRNA binding proteins, it binds directly to 16S rRNA where it nucleates assembly of the head domain of the 30S subunit. Is located at the subunit interface close to the decoding center, probably blocks exit of the E-site tRNA. The chain is Small ribosomal subunit protein uS7 from Legionella pneumophila (strain Paris).